Here is a 239-residue protein sequence, read N- to C-terminus: Cytochrome b6-f complex iron-sulfur subunit 1, cyanelle (239 aa).

The transit peptide at 1-60 (MAFTTTAVVAPRGAKITGQSSTCAIQNGKTVAVGTSKQVGSFKPVFAAAKPAKETTFSVS) directs the protein to the cyanelle. Residues 81–101 (LLGAIAGPVAGAGGPFVSFLV) form a helical membrane-spanning segment. In terms of domain architecture, Rieske spans 125 to 221 (VSSWLETHKP…VSVLEDGVVA (97 aa)). The [2Fe-2S] cluster site is built by cysteine 167, histidine 169, cysteine 185, and histidine 188. Cysteine 172 and cysteine 187 form a disulfide bridge.

It belongs to the Rieske iron-sulfur protein family. In terms of assembly, the 4 large subunits of the cytochrome b6-f complex are cytochrome b6, subunit IV (17 kDa polypeptide, petD), cytochrome f and the Rieske protein, while the 4 small subunits are petG, petL, petM and petN. The complex functions as a dimer. [2Fe-2S] cluster serves as cofactor.

It is found in the plastid. Its subcellular location is the cyanelle thylakoid membrane. The catalysed reaction is 2 oxidized [plastocyanin] + a plastoquinol + 2 H(+)(in) = 2 reduced [plastocyanin] + a plastoquinone + 4 H(+)(out). In terms of biological role, component of the cytochrome b6-f complex, which mediates electron transfer between photosystem II (PSII) and photosystem I (PSI), cyclic electron flow around PSI, and state transitions. The protein is Cytochrome b6-f complex iron-sulfur subunit 1, cyanelle (petC-1) of Cyanophora paradoxa.